The primary structure comprises 512 residues: Histidine ammonia-lyase (512 aa).

Residues 143–145 (CSG) constitute a cross-link (5-imidazolinone (Cys-Gly)). Position 144 is a 2,3-didehydroalanine (Ser) (S144).

Belongs to the PAL/histidase family. Post-translationally, contains an active site 4-methylidene-imidazol-5-one (MIO), which is formed autocatalytically by cyclization and dehydration of residues Cys-Ser-Gly.

The protein localises to the cytoplasm. It carries out the reaction L-histidine = trans-urocanate + NH4(+). The protein operates within amino-acid degradation; L-histidine degradation into L-glutamate; N-formimidoyl-L-glutamate from L-histidine: step 1/3. The sequence is that of Histidine ammonia-lyase from Streptomyces coelicolor (strain ATCC BAA-471 / A3(2) / M145).